A 473-amino-acid chain; its full sequence is ATP synthase subunit beta (473 aa).

158 to 165 (GGAGVGKT) contributes to the ATP binding site.

This sequence belongs to the ATPase alpha/beta chains family. F-type ATPases have 2 components, CF(1) - the catalytic core - and CF(0) - the membrane proton channel. CF(1) has five subunits: alpha(3), beta(3), gamma(1), delta(1), epsilon(1). CF(0) has three main subunits: a(1), b(2) and c(9-12). The alpha and beta chains form an alternating ring which encloses part of the gamma chain. CF(1) is attached to CF(0) by a central stalk formed by the gamma and epsilon chains, while a peripheral stalk is formed by the delta and b chains.

Its subcellular location is the cell membrane. The catalysed reaction is ATP + H2O + 4 H(+)(in) = ADP + phosphate + 5 H(+)(out). Its function is as follows. Produces ATP from ADP in the presence of a proton gradient across the membrane. The catalytic sites are hosted primarily by the beta subunits. The protein is ATP synthase subunit beta of Bacillus pumilus (strain SAFR-032).